The following is a 680-amino-acid chain: Methionine--tRNA ligase (680 aa).

Positions 15 to 25 (PYANGSIHLGH) match the 'HIGH' region motif. 4 residues coordinate Zn(2+): Cys146, Cys149, Cys159, and Cys162. Positions 332-336 (KMSKS) match the 'KMSKS' region motif. An ATP-binding site is contributed by Lys335. One can recognise a tRNA-binding domain in the interval 579–680 (DFAKVDMRIA…EGAQPGMRVM (102 aa)).

Belongs to the class-I aminoacyl-tRNA synthetase family. MetG type 1 subfamily. As to quaternary structure, homodimer. It depends on Zn(2+) as a cofactor.

It is found in the cytoplasm. It carries out the reaction tRNA(Met) + L-methionine + ATP = L-methionyl-tRNA(Met) + AMP + diphosphate. In terms of biological role, is required not only for elongation of protein synthesis but also for the initiation of all mRNA translation through initiator tRNA(fMet) aminoacylation. In Photobacterium profundum (strain SS9), this protein is Methionine--tRNA ligase.